The following is a 358-amino-acid chain: Putative spore germination protein YfkT (358 aa).

A run of 10 helical transmembrane segments spans residues 10 to 30 (LFFGALYTLAVGLKHAPILMI), 36 to 56 (NAWHSYILGVVIVIPALWLMH), 81 to 101 (IIILLFSLYFLLINAHDIRFF), 107 to 127 (ILFLPRTPMAVLGGVIIFVAI), 143 to 163 (IFLFPFGILVLFLPFTLATQI), 179 to 199 (LQSGYYAFGTMGELIILPLLF), 210 to 230 (IFAILLGALLLAVMLFSSISV), 262 to 282 (IIAAFWIPVIMVKIAGSLYIV), 297 to 317 (AMYTPTGMFSVVCGFWFFLNT), and 326 to 346 (IKPIINVVISLLLPLLIYLII).

This sequence belongs to the amino acid-polyamine-organocation (APC) superfamily. Spore germination protein (SGP) (TC 2.A.3.9) family.

It localises to the cell membrane. Its function is as follows. May be involved in spore germination. The polypeptide is Putative spore germination protein YfkT (yfkT) (Bacillus subtilis (strain 168)).